A 350-amino-acid polypeptide reads, in one-letter code: UPF0284 protein MJ1598 (350 aa).

The protein belongs to the UPF0284 family.

The sequence is that of UPF0284 protein MJ1598 from Methanocaldococcus jannaschii (strain ATCC 43067 / DSM 2661 / JAL-1 / JCM 10045 / NBRC 100440) (Methanococcus jannaschii).